The sequence spans 131 residues: Snaclec bitiscetin subunit alpha (131 aa).

3 cysteine pairs are disulfide-bonded: C4/C15, C32/C125, and C100/C117. The 116-residue stretch at Y11–K126 folds into the C-type lectin domain.

It belongs to the snaclec family. Heterodimer of subunits alpha and beta; disulfide-linked. As to expression, expressed by the venom gland.

It is found in the secreted. Snaclec that binds to von Willebrand factor (VWF) and induces its interaction with GPIbalpha (GP1BA) (via the vWF A1 domain), resulting in platelet aggregation. This is Snaclec bitiscetin subunit alpha from Bitis arietans (African puff adder).